Consider the following 379-residue polypeptide: Mannitol-1-phosphate 5-dehydrogenase (379 aa).

3–14 (AVHFGAGNIGRG) provides a ligand contact to NAD(+).

The protein belongs to the mannitol dehydrogenase family.

The catalysed reaction is D-mannitol 1-phosphate + NAD(+) = beta-D-fructose 6-phosphate + NADH + H(+). The sequence is that of Mannitol-1-phosphate 5-dehydrogenase from Anoxybacillus flavithermus (strain DSM 21510 / WK1).